Consider the following 266-residue polypeptide: Protein crossbronx-like (266 aa).

The UBC core domain occupies 15–178 (KQGYHILAEY…VQEQAIASRN (164 aa)).

This sequence belongs to the ubiquitin-conjugating enzyme family. FTS subfamily.

The sequence is that of Protein crossbronx-like from Drosophila yakuba (Fruit fly).